The chain runs to 458 residues: Forkhead box protein J1-A (458 aa).

The span at threonine 68–serine 78 shows a compositional bias: polar residues. A disordered region spans residues threonine 68–methionine 99. A DNA-binding region (fork-head) is located at residues lysine 142–leucine 236. Positions threonine 305 to arginine 321 are enriched in basic residues. The disordered stretch occupies residues threonine 305–serine 324.

It belongs to the FOXJ1 family. In terms of tissue distribution, expressed in floor plate, dorsal forerunner cells, Kupffers vesicle, the floor plate, pronephric ducts and kidney.

It localises to the nucleus. Its function is as follows. Key transcription factor required for motile ciliogenesis. Activates genes essential for motile cilia formation and function. Its activity is sufficient for ectopic development of cilia that resemble motile cilia. The polypeptide is Forkhead box protein J1-A (Danio rerio (Zebrafish)).